We begin with the raw amino-acid sequence, 427 residues long: UDP-N-acetyl-D-mannosamine dehydrogenase (427 aa).

6 residues coordinate NAD(+): tyrosine 19, isoleucine 20, aspartate 39, arginine 44, threonine 91, and threonine 130. UDP-N-acetyl-alpha-D-mannosaminouronate-binding residues include arginine 155, valine 156, lysine 207, asparagine 211, arginine 214, histidine 245, arginine 247, and glycine 258. Lysine 207 serves as the catalytic Proton donor/acceptor. Cysteine 261 (nucleophile) is an active-site residue. UDP-N-acetyl-alpha-D-mannosaminouronate is bound by residues tyrosine 318 and lysine 319. An NAD(+)-binding site is contributed by arginine 326. UDP-N-acetyl-alpha-D-mannosaminouronate is bound at residue lysine 404.

The protein belongs to the UDP-glucose/GDP-mannose dehydrogenase family. As to quaternary structure, homotetramer; probably dimer of dimers.

It catalyses the reaction UDP-N-acetyl-alpha-D-mannosamine + 2 NAD(+) + H2O = UDP-N-acetyl-alpha-D-mannosaminouronate + 2 NADH + 3 H(+). Catalyzes the four-electron oxidation of UDP-N-acetyl-D-mannosamine (UDP-ManNAc), reducing NAD(+) and releasing UDP-N-acetylmannosaminuronic acid (UDP-ManNAcA). This Methanococcus vannielii (strain ATCC 35089 / DSM 1224 / JCM 13029 / OCM 148 / SB) protein is UDP-N-acetyl-D-mannosamine dehydrogenase (wecC).